Reading from the N-terminus, the 571-residue chain is Septation ring formation regulator EzrA (571 aa).

Topologically, residues 1 to 3 (MYY) are extracellular. A helical transmembrane segment spans residues 4–22 (MLIGFIIVVIAVIGAGYIL). At 23–571 (KRKHYQRINE…ESKVSVDDIE (549 aa)) the chain is on the cytoplasmic side. Coiled coils occupy residues 248–298 (LAQM…DTLE), 326–374 (DALA…ASGE), 400–437 (KFAE…ERER), and 478–529 (RIAE…ENHF).

It belongs to the EzrA family.

It is found in the cell membrane. Its function is as follows. Negative regulator of FtsZ ring formation; modulates the frequency and position of FtsZ ring formation. Inhibits FtsZ ring formation at polar sites. Interacts either with FtsZ or with one of its binding partners to promote depolymerization. The protein is Septation ring formation regulator EzrA of Listeria monocytogenes serovar 1/2a (strain ATCC BAA-679 / EGD-e).